The sequence spans 326 residues: MQLEQIVEQAESAIAAADSPTALDEVRVEYMGKKGQLTELLKGLGKLDPSERREAGQKINEAKQQVQTSINARKELLKAAELAQKLEAERIDVTLPGRHSAVGGVHPVTQTIRRIEQFFGDLGFSVKEGPEVEDGFHNFDALNIPANHPARADHDTFYFTPSTMLRTQTSGVQIRTMENEKPPLRIISPGRVYRNDYDQTHTPMFHQVEGLMVDTDVSFTQLKGILEDFLNHFFEESLTVRFRPSYFPFTEPSAEVDVMGKDGKWLEVLGCGMVHPNVLKAVGIDSEKYTGFAFGMGVERLTMLRYGVNDLRAFFENDLRFLKQFN.

Residue glutamate 251 participates in Mg(2+) binding.

This sequence belongs to the class-II aminoacyl-tRNA synthetase family. Phe-tRNA synthetase alpha subunit type 1 subfamily. In terms of assembly, tetramer of two alpha and two beta subunits. The cofactor is Mg(2+).

It localises to the cytoplasm. It catalyses the reaction tRNA(Phe) + L-phenylalanine + ATP = L-phenylalanyl-tRNA(Phe) + AMP + diphosphate + H(+). The sequence is that of Phenylalanine--tRNA ligase alpha subunit from Idiomarina loihiensis (strain ATCC BAA-735 / DSM 15497 / L2-TR).